The sequence spans 69 residues: Large ribosomal subunit protein bL28 (69 aa).

Belongs to the bacterial ribosomal protein bL28 family.

This Oleidesulfovibrio alaskensis (strain ATCC BAA-1058 / DSM 17464 / G20) (Desulfovibrio alaskensis) protein is Large ribosomal subunit protein bL28.